We begin with the raw amino-acid sequence, 78 residues long: Putative defensin-like protein 202 (78 aa).

The N-terminal stretch at 1 to 29 (MAKTQNFVCFTAVLLILILVSTEIPMIEG) is a signal peptide. Disulfide bonds link cysteine 44-cysteine 65, cysteine 49-cysteine 74, and cysteine 53-cysteine 76.

This sequence belongs to the DEFL family.

It localises to the secreted. The polypeptide is Putative defensin-like protein 202 (Arabidopsis thaliana (Mouse-ear cress)).